The sequence spans 294 residues: C-type lectin domain family 4 member G (294 aa).

The Cytoplasmic segment spans residues methionine 1–arginine 30. Residues leucine 31–threonine 51 form a helical; Signal-anchor for type II membrane protein membrane-spanning segment. Residues leucine 52–tyrosine 294 are Extracellular-facing. Residue asparagine 73 is glycosylated (N-linked (GlcNAc...) asparagine). Residues alanine 100–alanine 151 adopt a coiled-coil conformation. Asparagine 159, asparagine 246, and asparagine 256 each carry an N-linked (GlcNAc...) asparagine glycan. The 116-residue stretch at phenylalanine 172–cysteine 287 folds into the C-type lectin domain. A disulfide bridge connects residues cysteine 264 and cysteine 278.

The protein resides in the cell membrane. In terms of biological role, binds mannose, N-acetylglucosamine (GlcNAc) and fucose, but not galactose, in a Ca(2+)-dependent manner. The chain is C-type lectin domain family 4 member G (Clec4g) from Mus musculus (Mouse).